We begin with the raw amino-acid sequence, 60 residues long: Cytotoxin 5 (60 aa).

4 disulfides stabilise this stretch: Cys-3–Cys-21, Cys-14–Cys-38, Cys-42–Cys-53, and Cys-54–Cys-59.

Belongs to the three-finger toxin family. Short-chain subfamily. Type IA cytotoxin sub-subfamily. As to quaternary structure, monomer in solution; Homodimer and oligomer in the presence of negatively charged lipids forming a pore with a size ranging between 20 and 30 Angstroms. As to expression, expressed by the venom gland.

The protein resides in the secreted. It localises to the target cell membrane. Its function is as follows. Shows cytolytic activity on many different cells by forming pore in lipid membranes. In vivo, increases heart rate or kills the animal by cardiac arrest. In addition, it binds to heparin with high affinity, interacts with Kv channel-interacting protein 1 (KCNIP1) in a calcium-independent manner, and binds to integrin alpha-V/beta-3 (ITGAV/ITGB3) with moderate affinity. The polypeptide is Cytotoxin 5 (Naja kaouthia (Monocled cobra)).